The primary structure comprises 584 residues: DNA damage-binding protein 2 (584 aa).

Residues 1–87 (MGPTTRARFV…PVAAAARSGR (87 aa)) are disordered. A compositionally biased stretch (basic residues) spans 8 to 20 (RFVHNRRRRRRRG). Acidic residues-rich tracts occupy residues 25 to 35 (PDDDDEEEDQQ) and 45 to 66 (DEGE…DGEA). Residues 122-140 (KPCFLCKMPGGHTTLTCPH) form a CCHC-type zinc finger. 7 WD repeats span residues 192–232 (FHQR…EKIT), 236–278 (VHSC…SLLN), 288–327 (STWR…RIGD), 333–373 (KKGS…PNSA), 378–418 (AHGR…LESP), 438–481 (EWDP…LAEV), and 484–523 (PDIT…DATE). The DWD box signature appears at 351 to 366 (LLSSGNDHYARIWDTR). Residues 517 to 532 (TESDATEERNREKAKE) show a composition bias toward basic and acidic residues. Residues 517 to 584 (TESDATEERN…TIKGKGKSKV (68 aa)) are disordered. Over residues 562–584 (KKKKKAKKTRFTHTIKGKGKSKV) the composition is skewed to basic residues.

It belongs to the WD repeat DDB2/WDR76 family. Component of the UV-DDB complex, which is composed of DDB1 and DDB2. As to expression, expressed in proliferating tissues such as shoot apical meristem (SAM), root tips and young leaves. Not detected in mature leaves.

It is found in the nucleus. In terms of biological role, required for DNA repair. Binds to DDB1 to form the UV-damaged DNA-binding protein complex (the UV-DDB complex). The UV-DDB complex may recognize UV-induced DNA damage and recruit proteins of the nucleotide excision repair pathway (the NER pathway) to initiate DNA repair. May function as the substrate recognition module for a DCX (DDB1-CUL4-X-box) E3 ubiquitin-protein ligase complex. The polypeptide is DNA damage-binding protein 2 (Oryza sativa subsp. japonica (Rice)).